An 855-amino-acid polypeptide reads, in one-letter code: Alanine--tRNA ligase (855 aa).

Zn(2+) contacts are provided by H555, H559, C657, and H661.

It belongs to the class-II aminoacyl-tRNA synthetase family. Zn(2+) serves as cofactor.

Its subcellular location is the cytoplasm. The catalysed reaction is tRNA(Ala) + L-alanine + ATP = L-alanyl-tRNA(Ala) + AMP + diphosphate. Its function is as follows. Catalyzes the attachment of alanine to tRNA(Ala) in a two-step reaction: alanine is first activated by ATP to form Ala-AMP and then transferred to the acceptor end of tRNA(Ala). Also edits incorrectly charged Ser-tRNA(Ala) and Gly-tRNA(Ala) via its editing domain. The polypeptide is Alanine--tRNA ligase (Wolinella succinogenes (strain ATCC 29543 / DSM 1740 / CCUG 13145 / JCM 31913 / LMG 7466 / NCTC 11488 / FDC 602W) (Vibrio succinogenes)).